The following is a 166-amino-acid chain: uncharacterized protein (166 aa).

Positions 73-88 (SKLNNNNNSNNNNKMA) are enriched in low complexity. Disordered regions lie at residues 73–101 (SKLN…EKDK) and 126–166 (PQSS…EFNN). Positions 89–101 (VDNKDNKDNEKDK) are enriched in basic and acidic residues. A compositionally biased stretch (low complexity) spans 134–154 (SPTHKSPSSSPKTISPVKVSP). Residues 155–166 (TSSPIKNPEFNN) show a composition bias toward polar residues.

This is an uncharacterized protein from Dictyostelium discoideum (Social amoeba).